Reading from the N-terminus, the 2758-residue chain is Highly reducing polyketide synthase NEC1 (2758 aa).

In terms of domain architecture, Ketosynthase family 3 (KS3) spans 153–492 (EASSPIIGLD…GSNAHVVMDD (340 aa)). The tract at residues 512-576 (PRLPGSSSSR…NTDTLQTTDT (65 aa)) is disordered. Residues 566–576 (TNTDTLQTTDT) show a composition bias toward low complexity. The malonyl-CoA:ACP transacylase (MAT) domain stretch occupies residues 700–1044 (VFTGQGAQWP…GYATVLKRGD (345 aa)). The active-site For malonyltransferase activity is the Ser-790. The N-terminal hotdog fold stretch occupies residues 1124–1255 (HELLGAPVPD…GFVRTEYSQT (132 aa)). The interval 1124–1442 (HELLGAPVPD…VFKTIPNTAS (319 aa)) is dehydratase (DH) domain. One can recognise a PKS/mFAS DH domain in the interval 1124-1443 (HELLGAPVPD…FKTIPNTASS (320 aa)). The Proton acceptor; for dehydratase activity role is filled by His-1156. Positions 1283–1443 (TSMVHADKVY…FKTIPNTASS (161 aa)) are C-terminal hotdog fold. The active-site Proton donor; for dehydratase activity is Asp-1351. Positions 1622 to 1727 (LEVGGGTGGA…RKLLKPGGKL (106 aa)) are methyltransferase (CMet) domain. The tract at residues 2031-2344 (GTADVCFSED…LGKGEDAVVL (314 aa)) is enoyl reductase (ER) domain. Residues 2372 to 2553 (ASYMVVGGLG…PVAVSLDLPV (182 aa)) are ketoreductase (KR) domain. The region spanning 2673 to 2750 (EAQAVVLDAL…ALAAAVAGRS (78 aa)) is the Carrier domain. O-(pantetheine 4'-phosphoryl)serine is present on Ser-2710.

Its function is as follows. Highly reducing polyketide synthase; part of the gene cluster that mediates the biosynthesis of nectriapyrone and its analogs phomopyrone A, acropyrone and zaepyrone. The nectriapyrone biosynthetic gene cluster consists of two genes, the highly reducing polyketide synthase NEC1 that produces a demethylated analog of nectriapyrone from one unit of acetyl-CoA and one unit of malonyl-CoA; and the O-methyltransferase NEC2 that further methylates the NEC1 product to yield nectriapyrone. Nectriapyrone is further hydrolyzed to nectriapyrone D, also known as gulypyrone B, by an unidentified hydrolase localized outside the nectriapyrone cluster. The protein is Highly reducing polyketide synthase NEC1 of Pyricularia oryzae (strain 70-15 / ATCC MYA-4617 / FGSC 8958) (Rice blast fungus).